The chain runs to 120 residues: GATA transcription factor 23 (120 aa).

The GATA-type zinc finger occupies 22 to 76 (KGTIRCCSECKTTKTPMWRGGPTGPKSLCNACGIRHRKQRRSELLGIHIIRSHKS).

Belongs to the type IV zinc-finger family. Class B subfamily.

The protein resides in the nucleus. Its function is as follows. Transcriptional regulator that specifically binds 5'-GATA-3' or 5'-GAT-3' motifs within gene promoters. The chain is GATA transcription factor 23 (GATA23) from Arabidopsis thaliana (Mouse-ear cress).